Consider the following 102-residue polypeptide: Vacuolar ATPase assembly integral membrane protein VMA21 homolog (102 aa).

Residues 1–33 (MTTSSSSEPSTMATLFPNFRDQEVQSAVKNLLT) lie on the Cytoplasmic side of the membrane. Residues 34 to 54 (YSLVILIVPLASMFLLKQFFF) traverse the membrane as a helical segment. The Lumenal portion of the chain corresponds to 55 to 67 (EGLLGVSANDALT). The chain crosses the membrane as a helical span at residues 68 to 88 (YSAIIAVVLVHVVLGIWLFAA). At 89 to 102 (TKQEDRKKRENKQD) the chain is on the cytoplasmic side.

The protein belongs to the VMA21 family.

It localises to the endoplasmic reticulum membrane. The protein resides in the endoplasmic reticulum-Golgi intermediate compartment membrane. The protein localises to the cytoplasmic vesicle. It is found in the COPII-coated vesicle membrane. In terms of biological role, required for the assembly of the V0 complex of the vacuolar ATPase (V-ATPase) in the endoplasmic reticulum. The sequence is that of Vacuolar ATPase assembly integral membrane protein VMA21 homolog from Caenorhabditis elegans.